The following is a 361-amino-acid chain: 3-dehydroquinate synthase (361 aa).

Residues 107–111 (GVIGD), 131–132 (TS), Lys-144, and Lys-153 each bind NAD(+). Residues Glu-186, His-251, and His-268 each contribute to the Zn(2+) site.

Belongs to the sugar phosphate cyclases superfamily. Dehydroquinate synthase family. NAD(+) serves as cofactor. It depends on Co(2+) as a cofactor. The cofactor is Zn(2+).

The protein resides in the cytoplasm. It carries out the reaction 7-phospho-2-dehydro-3-deoxy-D-arabino-heptonate = 3-dehydroquinate + phosphate. It participates in metabolic intermediate biosynthesis; chorismate biosynthesis; chorismate from D-erythrose 4-phosphate and phosphoenolpyruvate: step 2/7. Its function is as follows. Catalyzes the conversion of 3-deoxy-D-arabino-heptulosonate 7-phosphate (DAHP) to dehydroquinate (DHQ). The chain is 3-dehydroquinate synthase from Synechocystis sp. (strain ATCC 27184 / PCC 6803 / Kazusa).